Reading from the N-terminus, the 212-residue chain is Adenine phosphoribosyltransferase (212 aa).

This sequence belongs to the purine/pyrimidine phosphoribosyltransferase family. Homodimer.

It is found in the cytoplasm. It catalyses the reaction AMP + diphosphate = 5-phospho-alpha-D-ribose 1-diphosphate + adenine. The protein operates within purine metabolism; AMP biosynthesis via salvage pathway; AMP from adenine: step 1/1. In terms of biological role, catalyzes a salvage reaction resulting in the formation of AMP, that is energically less costly than de novo synthesis. The chain is Adenine phosphoribosyltransferase from Mycobacterium tuberculosis (strain ATCC 25618 / H37Rv).